A 117-amino-acid chain; its full sequence is Non-specific lipid-transfer protein (117 aa).

The first 26 residues, 1 to 26, serve as a signal peptide directing secretion; it reads MASSAVIKLACAVLLCIVVAAPYAEA. Cystine bridges form between C30–C76, C40–C53, C54–C99, and C74–C113.

Belongs to the plant LTP family.

Plant non-specific lipid-transfer proteins transfer phospholipids as well as galactolipids across membranes. May play a role in wax or cutin deposition in the cell walls of expanding epidermal cells and certain secretory tissues. The chain is Non-specific lipid-transfer protein from Spinacia oleracea (Spinach).